The following is a 596-amino-acid chain: Nuclear receptor subfamily 2 group C member 2 (596 aa).

The residue at position 19 (Ser-19) is a Phosphoserine; by MAPK. Ser-46 is modified (phosphoserine). A phosphoserine; by MAPK mark is found at Ser-55 and Ser-68. Ser-98 bears the Phosphoserine mark. The nuclear receptor DNA-binding region spans 114-189 (VEYCVVCGDK…MGMKMESVQS (76 aa)). NR C4-type zinc fingers lie at residues 117–137 (CVVC…CEGC) and 153–177 (CRSN…LKKC). Residue Lys-192 forms a Glycyl lysine isopeptide (Lys-Gly) (interchain with G-Cter in SUMO2) linkage. Ser-219 bears the Phosphoserine mark. An N6-acetyllysine modification is found at Lys-231. The 243-residue stretch at 341-583 (GSIHVISRDQ…SIIPYILKME (243 aa)) folds into the NR LBD domain.

Belongs to the nuclear hormone receptor family. NR2 subfamily. Homodimer; can bind DNA as homodimer. Heterodimer; binds DNA as a heterodimer with NR2C1 required for chromatin remodeling and for binding to promoter regions such as globin DR1 repeats. Interacts with PCAF; the interaction preferentially occurs on the non-phosphorylated form and induces NR2C2-mediated transactivation activity and does not require the ligand-binding domain. Interacts (MAPK-mediated phosphorylated form) with NRIP1; the interaction promotes repression of NR2C2-mediated activity. Interacts with NR2C2AP; the interaction represses selective NR2C2-mediated transcriptional activity. Interacts with NLRP10. Interacts (via ligand-binding region) with transcriptional corepressor JAZF1; the interaction promotes NR2C2-mediated transcriptional repression. Post-translationally, phosphorylation on Ser-19 and Ser-68 is an important regulator of NR2C2-mediated transcriptional activity. Phosphorylation on these residues recruits the corepressor, NRIP1, leading to transcripional repression, whereas the non-phosphorylated form preferentially recruits the coactivator, PCAF.

The protein localises to the nucleus. Its function is as follows. Orphan nuclear receptor that can act as a repressor or activator of transcription. An important repressor of nuclear receptor signaling pathways such as retinoic acid receptor, retinoid X, vitamin D3 receptor, thyroid hormone receptor and estrogen receptor pathways. May regulate gene expression during the late phase of spermatogenesis. Together with NR2C1, forms the core of the DRED (direct repeat erythroid-definitive) complex that represses embryonic and fetal globin transcription including that of GATA1. Binds to hormone response elements (HREs) consisting of two 5'-AGGTCA-3' half site direct repeat consensus sequences. Plays a fundamental role in early embryonic development and embryonic stem cells. Required for normal spermatogenesis and cerebellum development. Appears to be important for neurodevelopmentally regulated behavior. Activates transcriptional activity of LHCG. Antagonist of PPARA-mediated transactivation. This chain is Nuclear receptor subfamily 2 group C member 2 (NR2C2), found in Homo sapiens (Human).